Here is a 465-residue protein sequence, read N- to C-terminus: Antithrombin-III (465 aa).

Residues 1 to 32 form the signal peptide; that stretch reads MISNGIGTVTTGKRSMCLFPLLLIGLWGCVTC. 2 disulfide bridges follow: cysteine 41/cysteine 161 and cysteine 54/cysteine 128. A Phosphothreonine modification is found at threonine 64. Serine 69 bears the Phosphoserine mark. Tryptophan 82 lines the heparin pocket. Asparagine 129 carries an N-linked (GlcNAc...) asparagine glycan. Residue arginine 162 participates in heparin binding. Asparagine 168 carries an N-linked (GlcNAc...) asparagine glycan. Arginine 178 lines the heparin pocket. Residues asparagine 188 and asparagine 225 are each glycosylated (N-linked (GlcNAc...) asparagine). Cysteine 280 and cysteine 463 are disulfide-bonded.

The protein belongs to the serpin family. Forms protease inhibiting heterodimer with TMPRSS7. In terms of processing, phosphorylated by FAM20C in the extracellular medium. In terms of tissue distribution, plasma.

The protein resides in the secreted. Its subcellular location is the extracellular space. In terms of biological role, most important serine protease inhibitor in plasma that regulates the blood coagulation cascade. AT-III inhibits thrombin, matriptase-3/TMPRSS7, as well as factors IXa, Xa and XIa. Its inhibitory activity is greatly enhanced in the presence of heparin. The sequence is that of Antithrombin-III (SERPINC1) from Ovis aries (Sheep).